Here is a 466-residue protein sequence, read N- to C-terminus: 23S rRNA (uracil(1939)-C(5))-methyltransferase RlmD (466 aa).

A TRAM domain is found at methionine 1–glutamate 54. Residues cysteine 67, cysteine 73, cysteine 76, and cysteine 155 each contribute to the [4Fe-4S] cluster site. 6 residues coordinate S-adenosyl-L-methionine: glutamine 264, phenylalanine 293, asparagine 298, glutamate 314, asparagine 342, and aspartate 363. Cysteine 393 acts as the Nucleophile in catalysis.

The protein belongs to the class I-like SAM-binding methyltransferase superfamily. RNA M5U methyltransferase family. RlmD subfamily.

It carries out the reaction uridine(1939) in 23S rRNA + S-adenosyl-L-methionine = 5-methyluridine(1939) in 23S rRNA + S-adenosyl-L-homocysteine + H(+). Its function is as follows. Catalyzes the formation of 5-methyl-uridine at position 1939 (m5U1939) in 23S rRNA. This chain is 23S rRNA (uracil(1939)-C(5))-methyltransferase RlmD, found in Bordetella pertussis (strain Tohama I / ATCC BAA-589 / NCTC 13251).